We begin with the raw amino-acid sequence, 21 residues long: Hemolymph 65 kDa lectin BG04 (21 aa).

Hemolymph.

The protein resides in the secreted. Its function is as follows. Binds and precipitates antigens of the parasite Echinostoma paraensei. The protein is Hemolymph 65 kDa lectin BG04 (BG04) of Biomphalaria glabrata (Bloodfluke planorb).